Here is a 247-residue protein sequence, read N- to C-terminus: Cell division protein ZapD (247 aa).

It belongs to the ZapD family. As to quaternary structure, interacts with FtsZ.

It localises to the cytoplasm. Functionally, cell division factor that enhances FtsZ-ring assembly. Directly interacts with FtsZ and promotes bundling of FtsZ protofilaments, with a reduction in FtsZ GTPase activity. The polypeptide is Cell division protein ZapD (Escherichia coli O17:K52:H18 (strain UMN026 / ExPEC)).